Reading from the N-terminus, the 366-residue chain is Putative transcription factor PHD1 (366 aa).

The 107-residue stretch at 186 to 292 folds into the HTH APSES-type domain; it reads RVITTMWEDE…KDIESIVDAR (107 aa). A DNA-binding region (H-T-H motif) is located at residues 220-241; the sequence is GTKLLNVTKMTRGRRDGILRSE. Residues 294–366 form a disordered region; sequence PSNKASLTPK…QTSRAKNELS (73 aa). The span at 312 to 328 shows a compositional bias: basic and acidic residues; sequence EPSDNKHEIATEIKPKS.

The protein belongs to the EFG1/PHD1/stuA family.

The protein resides in the nucleus. Functionally, putative transcription factor that functions in pseudohyphal growth. This is Putative transcription factor PHD1 (PHD1) from Saccharomyces cerevisiae (strain ATCC 204508 / S288c) (Baker's yeast).